The sequence spans 389 residues: MGIKGLTALMRDNAPGAIKEQKFESYLDRRVAIDASMHIYQFMMVVGRQGEQQLTNEAGEVTSHLQGMLNRTCRMLEAGIKPIYVFDGKPPVMKGGELAKRKDKREEAEAALKAAREAGNQEEVEKLSKRTVRVSKQHSQEVMKLASLLGVPVFEAPCEAEASCAAMCKAGLVWAVATEDMDTLTFAAPRLARNLMAPKSQDKPVLEFDYDKVLAGLGLTPEQFIDMCILCGCDYCDTIRGIGPKTALKLIKEHGSIEKILEEIDTEKYPPPQDWDFAGARELFKNPEVMDTTGIALSWKAPNEEGLIDFLVKEKQFNEERVRAVCAKVKKARQGKASQNRLESFFGPPTIISSTIGKRKVEEKKGKNGKAGLANKKSKGVSGFRRSKN.

Positions 1-105 (MGIKGLTALM…GELAKRKDKR (105 aa)) are N-domain. D34 provides a ligand contact to Mg(2+). R71 lines the DNA pocket. 5 residues coordinate Mg(2+): D87, E159, E161, D180, and D182. The interval 123–254 (EVEKLSKRTV…KTALKLIKEH (132 aa)) is I-domain. Position 159 (E159) interacts with DNA. 2 residues coordinate DNA: G232 and D234. D234 is a Mg(2+) binding site. The interaction with PCNA stretch occupies residues 338–346 (SQNRLESFF). The segment at 356–389 (IGKRKVEEKKGKNGKAGLANKKSKGVSGFRRSKN) is disordered.

Belongs to the XPG/RAD2 endonuclease family. FEN1 subfamily. As to quaternary structure, interacts with PCNA. Three molecules of FEN1 bind to one PCNA trimer with each molecule binding to one PCNA monomer. PCNA stimulates the nuclease activity without altering cleavage specificity. The cofactor is Mg(2+). In terms of processing, phosphorylated. Phosphorylation upon DNA damage induces relocalization to the nuclear plasma.

The protein resides in the nucleus. It localises to the nucleolus. It is found in the nucleoplasm. The protein localises to the mitochondrion. Its function is as follows. Structure-specific nuclease with 5'-flap endonuclease and 5'-3' exonuclease activities involved in DNA replication and repair. During DNA replication, cleaves the 5'-overhanging flap structure that is generated by displacement synthesis when DNA polymerase encounters the 5'-end of a downstream Okazaki fragment. It enters the flap from the 5'-end and then tracks to cleave the flap base, leaving a nick for ligation. Also involved in the long patch base excision repair (LP-BER) pathway, by cleaving within the apurinic/apyrimidinic (AP) site-terminated flap. Acts as a genome stabilization factor that prevents flaps from equilibrating into structures that lead to duplications and deletions. Also possesses 5'-3' exonuclease activity on nicked or gapped double-stranded DNA, and exhibits RNase H activity. Also involved in replication and repair of rDNA and in repairing mitochondrial DNA. The sequence is that of Flap endonuclease 1 from Ostreococcus lucimarinus (strain CCE9901).